The chain runs to 254 residues: Dolichol-phosphate mannosyltransferase subunit 1 (254 aa).

Positions 25, 27, 29, 56, 58, 111, 112, 113, 140, and 227 each coordinate GDP-alpha-D-mannose. Position 113 (Asp113) interacts with Mg(2+). Asp113 lines the Mn(2+) pocket.

This sequence belongs to the glycosyltransferase 2 family. In terms of assembly, component of the dolichol-phosphate mannose (DPM) synthase complex composed of dpm1, dpm2 and dpm3. The cofactor is Mg(2+). Mn(2+) is required as a cofactor. Requires Ca(2+) as cofactor.

The protein localises to the endoplasmic reticulum. It carries out the reaction a di-trans,poly-cis-dolichyl phosphate + GDP-alpha-D-mannose = a di-trans,poly-cis-dolichyl beta-D-mannosyl phosphate + GDP. The protein operates within protein modification; protein glycosylation. Its function is as follows. Transfers mannose from GDP-mannose to dolichol monophosphate to form dolichol phosphate mannose (Dol-P-Man) which is the mannosyl donor in pathways leading to N-glycosylation, glycosyl phosphatidylinositol membrane anchoring, and O-mannosylation of proteins; catalytic subunit of the dolichol-phosphate mannose (DPM) synthase complex. The protein is Dolichol-phosphate mannosyltransferase subunit 1 (dpm1) of Dictyostelium discoideum (Social amoeba).